A 170-amino-acid chain; its full sequence is Metalloproteinase inhibitor 4 (170 aa).

One can recognise an NTR domain in the interval 1 to 105; sequence ISSEKVVPAS…SLNHHYHLNC (105 aa). Involved in metalloproteinase-binding regions lie at residues 6–9 and 48–49; these read VVPA and SS. 3 disulfide bridges follow: C107/C154, C112/C117, and C125/C146.

The protein belongs to the protease inhibitor I35 (TIMP) family.

It localises to the secreted. Its function is as follows. Complexes with metalloproteinases (such as collagenases) and irreversibly inactivates them by binding to their catalytic zinc cofactor. This is Metalloproteinase inhibitor 4 (TIMP4) from Oryctolagus cuniculus (Rabbit).